The chain runs to 290 residues: Ribosomal RNA small subunit methyltransferase A (290 aa).

S-adenosyl-L-methionine is bound by residues Asn27, Leu29, Gly54, Glu75, Asp100, and Asn125.

It belongs to the class I-like SAM-binding methyltransferase superfamily. rRNA adenine N(6)-methyltransferase family. RsmA subfamily.

It localises to the cytoplasm. It catalyses the reaction adenosine(1518)/adenosine(1519) in 16S rRNA + 4 S-adenosyl-L-methionine = N(6)-dimethyladenosine(1518)/N(6)-dimethyladenosine(1519) in 16S rRNA + 4 S-adenosyl-L-homocysteine + 4 H(+). Specifically dimethylates two adjacent adenosines (A1518 and A1519) in the loop of a conserved hairpin near the 3'-end of 16S rRNA in the 30S particle. May play a critical role in biogenesis of 30S subunits. In Streptococcus pyogenes serotype M5 (strain Manfredo), this protein is Ribosomal RNA small subunit methyltransferase A.